A 612-amino-acid chain; its full sequence is MRALLLLGALLVSLESTVSTPPWKGPKKHKLTDSEHTVVLTVTGEPCHFPFQYHRQLHHKCIHRGRPGPRPWCATTPNFEKDQRWAYCLEPKKVKDHCSKHNPCQKGGTCVNMPDGPRCICADHFTGKHCQKEKCFEPQFFRFFHENEIWHRLEPAGVVKCQCKGPNAQCKPLASQVCRTNPCLNGGSCLQAEGHRLCRCAPSFAGRLCDVDLKASCYDDRDRGLSYRGMAGTTLSGAPCQSWASEATYWNVTAEQVLNWGLGDHAFCRASTPPRGYRNPDNDTRPLCFIWKGDRLSWNYCRLAPCQAAAGHEHFPLPSPSALQKPESTTQTPLPSLTSGWCSPTPLASGGPGGCGQRLRKWLSSLNRVVGGLVALPGAHPYIAALYWDQHFCAGSLIAPCWVLTAAHCLQNRPAPKELTVVLGQDRHNQSCEQCQTLAVRDYRLHEAFSPITYQHDLALVRLQESADGCCAHPSPFVQPVCLPSTAARPAESEAAVCEVAGWGHQFEGGEYSSFLQEAQVPLIDPQRCSAPDVHGAAFTQGMLCAGFLEGGTDACQGDSGGPLVCEDETPERQLILRGIVSWGSGCGNRLKPGVYTDVANYLAWIREHTAS.

Positions 1–19 (MRALLLLGALLVSLESTVS) are cleaved as a signal peptide. Residues 42–90 (VTGEPCHFPFQYHRQLHHKCIHRGRPGPRPWCATTPNFEKDQRWAYCLE) form the Fibronectin type-II domain. Intrachain disulfides connect Cys-47/Cys-73, Cys-61/Cys-88, Cys-98/Cys-110, Cys-104/Cys-119, Cys-121/Cys-130, Cys-135/Cys-163, Cys-161/Cys-170, Cys-178/Cys-189, Cys-183/Cys-198, Cys-200/Cys-209, Cys-217/Cys-306, Cys-240/Cys-288, Cys-268/Cys-301, Cys-355/Cys-482, Cys-393/Cys-409, Cys-401/Cys-471, Cys-432/Cys-435, Cys-498/Cys-566, Cys-529/Cys-545, and Cys-556/Cys-587. Residues 94 to 131 (VKDHCSKHNPCQKGGTCVNMPDGPRCICADHFTGKHCQ) form the EGF-like 1 domain. An O-linked (Fuc) threonine glycan is attached at Thr-109. The Fibronectin type-I domain maps to 133-173 (EKCFEPQFFRFFHENEIWHRLEPAGVVKCQCKGPNAQCKPL). The EGF-like 2 domain occupies 174 to 210 (ASQVCRTNPCLNGGSCLQAEGHRLCRCAPSFAGRLCD). Positions 217 to 306 (CYDDRDRGLS…SWNYCRLAPC (90 aa)) constitute a Kringle domain. Asn-251 and Asn-282 each carry an N-linked (GlcNAc...) asparagine glycan. Positions 369 to 611 (VVGGLVALPG…YLAWIREHTA (243 aa)) constitute a Peptidase S1 domain. His-408 acts as the Charge relay system in catalysis. Asn-429 carries N-linked (GlcNAc...) asparagine glycosylation. The active-site Charge relay system is Asp-457. The Charge relay system role is filled by Ser-560.

Belongs to the peptidase S1 family. In terms of assembly, interacts with HRG; the interaction, which is enhanced in the presence of zinc ions and inhibited by heparin-binding, inhibits factor XII autoactivation and contact-initiated coagulation. Post-translationally, O- and N-glycosylated.

Its subcellular location is the secreted. The catalysed reaction is Selective cleavage of Arg-|-Ile bonds in factor VII to form factor VIIa and factor XI to form factor XIa.. Activity is promoted in the presence of negatively charged surfaces. In terms of biological role, factor XII is a serum glycoprotein that participates in the initiation of blood coagulation, fibrinolysis, and the generation of bradykinin and angiotensin. Prekallikrein is cleaved by factor XII to form kallikrein, which then cleaves factor XII first to alpha-factor XIIa and then to beta-factor XIIa. Alpha-factor XIIa activates factor XI to factor XIa. The sequence is that of Coagulation factor XII (F12) from Bos taurus (Bovine).